The primary structure comprises 328 residues: Probable tRNA-dihydrouridine synthase (328 aa).

18–20 (PME) serves as a coordination point for FMN. The active-site Proton donor is the Cys-105. FMN is bound by residues Lys-143, 208-210 (NGD), and 232-233 (GR).

It belongs to the Dus family. FMN is required as a cofactor.

It carries out the reaction a 5,6-dihydrouridine in tRNA + NAD(+) = a uridine in tRNA + NADH + H(+). It catalyses the reaction a 5,6-dihydrouridine in tRNA + NADP(+) = a uridine in tRNA + NADPH + H(+). Its function is as follows. Catalyzes the synthesis of 5,6-dihydrouridine (D), a modified base found in the D-loop of most tRNAs, via the reduction of the C5-C6 double bond in target uridines. This is Probable tRNA-dihydrouridine synthase (dus) from Staphylococcus aureus (strain Mu50 / ATCC 700699).